Consider the following 202-residue polypeptide: Adenosylcobalamin/alpha-ribazole phosphatase (202 aa).

Catalysis depends on His-8, which acts as the Tele-phosphohistidine intermediate. The active-site Proton donor/acceptor is the Glu-81.

It belongs to the phosphoglycerate mutase family.

It carries out the reaction adenosylcob(III)alamin 5'-phosphate + H2O = adenosylcob(III)alamin + phosphate. The catalysed reaction is alpha-ribazole 5'-phosphate + H2O = alpha-ribazole + phosphate. Its pathway is nucleoside biosynthesis; alpha-ribazole biosynthesis; alpha-ribazole from 5,6-dimethylbenzimidazole: step 2/2. In terms of biological role, catalyzes the conversion of adenosylcobalamin 5'-phosphate to adenosylcobalamin (vitamin B12); involved in the assembly of the nucleotide loop of cobalamin. Also catalyzes the hydrolysis of the phospho group from alpha-ribazole 5'-phosphate to form alpha-ribazole. In Salmonella typhi, this protein is Adenosylcobalamin/alpha-ribazole phosphatase (cobC).